Here is a 217-residue protein sequence, read N- to C-terminus: Large ribosomal subunit protein uL1 (217 aa).

This sequence belongs to the universal ribosomal protein uL1 family. As to quaternary structure, part of the 50S ribosomal subunit.

Binds directly to 23S rRNA. Probably involved in E site tRNA release. Functionally, protein L1 is also a translational repressor protein, it controls the translation of its operon by binding to its mRNA. In Thermoplasma volcanium (strain ATCC 51530 / DSM 4299 / JCM 9571 / NBRC 15438 / GSS1), this protein is Large ribosomal subunit protein uL1.